The following is a 188-amino-acid chain: Ribosome-recycling factor (188 aa).

It belongs to the RRF family.

It localises to the cytoplasm. Its function is as follows. Responsible for the release of ribosomes from messenger RNA at the termination of protein biosynthesis. May increase the efficiency of translation by recycling ribosomes from one round of translation to another. In Cereibacter sphaeroides (strain ATCC 17023 / DSM 158 / JCM 6121 / CCUG 31486 / LMG 2827 / NBRC 12203 / NCIMB 8253 / ATH 2.4.1.) (Rhodobacter sphaeroides), this protein is Ribosome-recycling factor.